A 101-amino-acid chain; its full sequence is Large ribosomal subunit protein uL23 (101 aa).

It belongs to the universal ribosomal protein uL23 family. In terms of assembly, part of the 50S ribosomal subunit. Contacts protein L29, and trigger factor when it is bound to the ribosome.

One of the early assembly proteins it binds 23S rRNA. One of the proteins that surrounds the polypeptide exit tunnel on the outside of the ribosome. Forms the main docking site for trigger factor binding to the ribosome. In Wigglesworthia glossinidia brevipalpis, this protein is Large ribosomal subunit protein uL23.